The chain runs to 289 residues: MPSLRDIRTRIGSVRSTRQITKAMKMVSAAKLRRAQDAVLKTRPYAMLLDQTLSRLAARAAAEEQVAHPLLAPRAQRTAEVVVVTSDRGLAGGFNSNICRFVQRFLTENADRFERIALATVGKKGREYFKARNLPIRRDYTGIHANLAYEKAEALAREATERYLAGEVDAVFLAYNEFKSAISQKQAVVQLLPVDTSAASADTAGVDFRYEPSREALLADLLPRHVAMQVWRALLESAASEHGARMSAMESATKNAEEMIASLSLQYNRARQAYVTKELSEIVSGAEAL.

Belongs to the ATPase gamma chain family. In terms of assembly, F-type ATPases have 2 components, CF(1) - the catalytic core - and CF(0) - the membrane proton channel. CF(1) has five subunits: alpha(3), beta(3), gamma(1), delta(1), epsilon(1). CF(0) has three main subunits: a, b and c.

The protein localises to the cell inner membrane. In terms of biological role, produces ATP from ADP in the presence of a proton gradient across the membrane. The gamma chain is believed to be important in regulating ATPase activity and the flow of protons through the CF(0) complex. The sequence is that of ATP synthase gamma chain from Anaeromyxobacter dehalogenans (strain 2CP-C).